The sequence spans 182 residues: MDRKTLDDTSKFLSYVLRHQPEAIGLKLDGEGWADIDALIAGAARDGRALDRALLGAVVENNDKKRFALSADGQRIRAVQGHSHAAVAIAYAPAVPPAVLYHGTASRFLDSIRERGLVPGSRHHVHLSARRATALEVGRRYGSPVLLEIDARDMHLAGHLFHQAENGVWLTERVPVRFIREA.

The protein belongs to the KptA/TPT1 family.

In terms of biological role, removes the 2'-phosphate from RNA via an intermediate in which the phosphate is ADP-ribosylated by NAD followed by a presumed transesterification to release the RNA and generate ADP-ribose 1''-2''-cyclic phosphate (APPR&gt;P). May function as an ADP-ribosylase. In Pseudomonas aeruginosa (strain UCBPP-PA14), this protein is Probable RNA 2'-phosphotransferase.